A 340-amino-acid chain; its full sequence is Speriolin-like protein (340 aa).

2 disordered regions span residues Gly42–Ser73 and Ala94–Pro135. Ser60 is modified (phosphoserine). The span at Pro123–Leu133 shows a compositional bias: basic and acidic residues. A Phosphoserine modification is found at Ser134.

This sequence belongs to the speriolin family.

It is found in the cytoplasm. This chain is Speriolin-like protein (SPATC1L), found in Homo sapiens (Human).